We begin with the raw amino-acid sequence, 343 residues long: MLSNRKKIILKSIIENYSKEAKPVSSKLLTYTLHLNVSSATIRADMAELEKQGYLLKKNYNSSGRIPSFKGYNYYLNNLIKRNEEFIEMFSFVDKIIQKKSFTKEQLIKKVLELLSEFTSYTAIAIGSDILKTSKINKIDLIYLNYFELIILIVTDKGHVQHQNIVLNQKKDVNMLDIKKVIIILNDLLKGKFLFEATLIIQSDIVKKTIGKYINCEEQFIESFVEIFANFVDNNCYLSGVLNILNQPEFNNIEIIKKLINCLTKKELIKIMTIKKRLTFKFSDNIELIQLENFTIISIPYSINKYEKGQIAILGPYRMNYHKVIPLLEYLSVYLSNLYDLNN.

This sequence belongs to the HrcA family.

Its function is as follows. Negative regulator of class I heat shock genes (grpE-dnaK-dnaJ and groELS operons). Prevents heat-shock induction of these operons. The polypeptide is Heat-inducible transcription repressor HrcA (Phytoplasma mali (strain AT)).